The chain runs to 88 residues: Small ribosomal subunit protein uS17 (88 aa).

It belongs to the universal ribosomal protein uS17 family. Part of the 30S ribosomal subunit.

One of the primary rRNA binding proteins, it binds specifically to the 5'-end of 16S ribosomal RNA. This chain is Small ribosomal subunit protein uS17, found in Ligilactobacillus salivarius (strain UCC118) (Lactobacillus salivarius).